The following is a 138-amino-acid chain: Putative pre-16S rRNA nuclease (138 aa).

It belongs to the YqgF nuclease family.

It localises to the cytoplasm. Could be a nuclease involved in processing of the 5'-end of pre-16S rRNA. This Cronobacter sakazakii (strain ATCC BAA-894) (Enterobacter sakazakii) protein is Putative pre-16S rRNA nuclease.